A 444-amino-acid polypeptide reads, in one-letter code: UDP-N-acetylmuramate--L-alanine ligase (444 aa).

An ATP-binding site is contributed by 110-116; the sequence is GAHGKTS.

This sequence belongs to the MurCDEF family. Post-translationally, phosphorylated by StkP in vitro. Dephosphorylated by PhpP in vitro.

The protein localises to the cytoplasm. The catalysed reaction is UDP-N-acetyl-alpha-D-muramate + L-alanine + ATP = UDP-N-acetyl-alpha-D-muramoyl-L-alanine + ADP + phosphate + H(+). Its pathway is cell wall biogenesis; peptidoglycan biosynthesis. In terms of biological role, cell wall formation. This chain is UDP-N-acetylmuramate--L-alanine ligase, found in Streptococcus pneumoniae serotype 4 (strain ATCC BAA-334 / TIGR4).